The following is a 208-amino-acid chain: ATP phosphoribosyltransferase (208 aa).

It belongs to the ATP phosphoribosyltransferase family. Short subfamily. As to quaternary structure, heteromultimer composed of HisG and HisZ subunits.

It localises to the cytoplasm. The enzyme catalyses 1-(5-phospho-beta-D-ribosyl)-ATP + diphosphate = 5-phospho-alpha-D-ribose 1-diphosphate + ATP. Its pathway is amino-acid biosynthesis; L-histidine biosynthesis; L-histidine from 5-phospho-alpha-D-ribose 1-diphosphate: step 1/9. In terms of biological role, catalyzes the condensation of ATP and 5-phosphoribose 1-diphosphate to form N'-(5'-phosphoribosyl)-ATP (PR-ATP). Has a crucial role in the pathway because the rate of histidine biosynthesis seems to be controlled primarily by regulation of HisG enzymatic activity. In Thermotoga maritima (strain ATCC 43589 / DSM 3109 / JCM 10099 / NBRC 100826 / MSB8), this protein is ATP phosphoribosyltransferase (hisG).